Here is a 1488-residue protein sequence, read N- to C-terminus: Chromosome partition protein MukB (1488 aa).

34 to 41 is a binding site for ATP; the sequence is GGNGAGKS. 3 coiled-coil regions span residues 326–418, 444–472, and 509–602; these read LEAD…QYNQ, LDTFQAKEQEATEKLLSLEQKMSVAQTAH, and RHLA…QRAP. The flexible hinge stretch occupies residues 666–783; it reads PGGAEDQRLN…SLPIFGRAAR (118 aa). 3 coiled-coil regions span residues 835 to 923, 977 to 1116, and 1209 to 1265; these read EAEI…AKLE, EMLS…AKAG, and VEAI…LQSV. Positions 1049 to 1074 are disordered; the sequence is ADSGAEERARQRRDELHAQLSNNRSR. The segment covering 1051-1065 has biased composition (basic and acidic residues); that stretch reads SGAEERARQRRDELH.

It belongs to the SMC family. MukB subfamily. In terms of assembly, homodimerization via its hinge domain. Binds to DNA via its C-terminal region. Interacts, and probably forms a ternary complex, with MukE and MukF via its C-terminal region. The complex formation is stimulated by calcium or magnesium. Interacts with tubulin-related protein FtsZ.

It is found in the cytoplasm. The protein localises to the nucleoid. Its function is as follows. Plays a central role in chromosome condensation, segregation and cell cycle progression. Functions as a homodimer, which is essential for chromosome partition. Involved in negative DNA supercoiling in vivo, and by this means organize and compact chromosomes. May achieve or facilitate chromosome segregation by condensation DNA from both sides of a centrally located replisome during cell division. The sequence is that of Chromosome partition protein MukB from Salmonella typhimurium (strain LT2 / SGSC1412 / ATCC 700720).